The sequence spans 173 residues: uncharacterized protein (173 aa).

The protein belongs to the M.jannaschii MJ0150/MJ0739/MJ0745/MJ1460/MJ1642 family.

This is an uncharacterized protein from Methanocaldococcus jannaschii (strain ATCC 43067 / DSM 2661 / JAL-1 / JCM 10045 / NBRC 100440) (Methanococcus jannaschii).